A 432-amino-acid polypeptide reads, in one-letter code: G-protein coupled receptor 22 (432 aa).

Topologically, residues 1–45 (MCFSPVLEINMQSESNVTVRDDIDDIDTNMYQPLSYPLSFQVSLT) are extracellular. The N-linked (GlcNAc...) asparagine glycan is linked to Asn16. The chain crosses the membrane as a helical span at residues 46–66 (GFLMLEIVLGLGSNLTVLVLY). Over 67–85 (CMKSNLINSVSNIITMNLH) the chain is Cytoplasmic. The helical transmembrane segment at 86 to 106 (VLDVIICVGCIPLTIVILLLS) threads the bilayer. Residues 107 to 115 (LESNTALIC) lie on the Extracellular side of the membrane. The helical transmembrane segment at 116–136 (CFHEACVSFASVSTAINVFAI) threads the bilayer. The Cytoplasmic portion of the chain corresponds to 137-156 (TLDRYDISVKPANRILTMGR). The helical transmembrane segment at 157–177 (AVMLMTSIWIFSFFSFLIPFI) threads the bilayer. The Extracellular segment spans residues 178 to 208 (EVNFFSLQSGNTWANKTLLCVSTSEYYTELG). Residue Asn192 is glycosylated (N-linked (GlcNAc...) asparagine). A helical membrane pass occupies residues 209-229 (MYYHLLVQIPIFFFTVIVMLI). Topologically, residues 230–314 (TYTKILQALN…ERQKRVFKMS (85 aa)) are cytoplasmic. A helical membrane pass occupies residues 315 to 335 (LLIISTFLLCWTPISVLNTTI). Over 336–348 (LCLGPSDLLVKLR) the chain is Extracellular. A helical transmembrane segment spans residues 349-369 (LCFLVMAYGTTIFHPLLYAFT). The Cytoplasmic portion of the chain corresponds to 370–432 (RQKFQKVLKS…KCLVPQVVTD (63 aa)).

Belongs to the G-protein coupled receptor 1 family. In terms of tissue distribution, abundant levels detected in the brain and heart and no detectable expression in other peripheral tissues.

The protein localises to the cell membrane. Functionally, orphan G-protein coupled receptor. Seems to act through a G(i)/G(o) mediated pathway. May be involved in ciliogenesis. The sequence is that of G-protein coupled receptor 22 (Gpr22) from Mus musculus (Mouse).